An 880-amino-acid polypeptide reads, in one-letter code: Envelope glycoprotein gp160 (880 aa).

Residues 1 to 35 (MKAMETQRNCRTLSLKEIILCTLVLGIIGIIKCED) form the signal peptide. Topologically, residues 36–701 (NMWVTVYYGV…ITSWLWYIKI (666 aa)) are extracellular. Cys-57 and Cys-77 are joined by a disulfide. 19 N-linked (GlcNAc...) asparagine; by host glycosylation sites follow: Asn-91, Asn-133, Asn-145, Asn-148, Asn-157, Asn-163, Asn-173, Asn-177, Asn-221, Asn-256, Asn-265, Asn-286, Asn-299, Asn-312, Asn-318, Asn-324, Asn-356, Asn-372, and Asn-381. Cystine bridges form between Cys-122/Cys-229, Cys-129/Cys-220, Cys-134/Cys-174, Cys-242/Cys-271, and Cys-252/Cys-263. Residues 134-173 (CSLFKCIKENGNTTNCTVQISTGNDSTANNITVGTIDMYN) form a V1 region. Positions 174–220 (CSFNATTELRDRKKQVYSLFYRQDLEPLEGNKPPEGDKNALYRLYNC) are V2. The interval 319 to 352 (CTRTGNNTIKGIPIGPSQIFYGIETVIGDTRQAF) is V3. A disulfide bridge connects residues Cys-319 and Cys-353. The tract at residues 389 to 399 (STGGDLEVTNL) is CD4-binding loop. Intrachain disulfides connect Cys-403–Cys-461 and Cys-410–Cys-434. The interval 410 to 434 (CNTSILFNTSIIFNETKDDNITIPC) is V4. 6 N-linked (GlcNAc...) asparagine; by host glycosylation sites follow: Asn-411, Asn-417, Asn-423, Asn-429, Asn-464, and Asn-479. A V5 region spans residues 479 to 487 (NKSAMFTPV). The fusion peptide stretch occupies residues 528–549 (AAVGLGALFLGFLGAAGSTMGA). The tract at residues 591–609 (KQLQARVLAVERYLKDQQL) is immunosuppression. Cys-615 and Cys-621 are disulfide-bonded. Asn-628, Asn-633, Asn-642, and Asn-654 each carry an N-linked (GlcNAc...) asparagine; by host glycan. Residues 650-684 (KEVSNYTDVIYNLLEKAQTQQENNEKELLELDKWA) are a coiled coil. The interval 679–700 (ELDKWASLWNWFDITSWLWYIK) is MPER; binding to GalCer. Residues 702–722 (FIIIVGGLIGLRIVFALLSIV) traverse the membrane as a helical segment. The Cytoplasmic segment spans residues 723–880 (NRVRQGYSPL…IRQGLERALL (158 aa)). Positions 729–732 (YSPL) match the YXXL motif; contains endocytosis signal motif. Cys-781 is lipidated: S-palmitoyl cysteine; by host. A Di-leucine internalization motif motif is present at residues 879-880 (LL).

This sequence belongs to the HIV-1 env protein family. In terms of assembly, the mature envelope protein (Env) consists of a homotrimer of non-covalently associated gp120-gp41 heterodimers. The resulting complex protrudes from the virus surface as a spike. There seems to be as few as 10 spikes on the average virion. Interacts with host CD4, CCR5 and CXCR4. Gp120 also interacts with the C-type lectins CD209/DC-SIGN and CLEC4M/DC-SIGNR (collectively referred to as DC-SIGN(R)). Gp120 and gp41 interact with GalCer. Gp120 interacts with host ITGA4/ITGB7 complex; on CD4+ T-cells, this interaction results in rapid activation of integrin ITGAL/LFA-1, which facilitates efficient cell-to-cell spreading of HIV-1. Gp120 interacts with cell-associated heparan sulfate; this interaction increases virus infectivity on permissive cells and may be involved in infection of CD4- cells. The mature envelope protein (Env) consists of a homotrimer of non-covalently associated gp120-gp41 heterodimers. The resulting complex protrudes from the virus surface as a spike. There seems to be as few as 10 spikes on the average virion. Post-translationally, highly glycosylated by host. The high number of glycan on the protein is reffered to as 'glycan shield' because it contributes to hide protein sequence from adaptive immune system. Palmitoylation of the transmembrane protein and of Env polyprotein (prior to its proteolytic cleavage) is essential for their association with host cell membrane lipid rafts. Palmitoylation is therefore required for envelope trafficking to classical lipid rafts, but not for viral replication. In terms of processing, specific enzymatic cleavages in vivo yield mature proteins. Envelope glycoproteins are synthesized as an inactive precursor that is heavily N-glycosylated and processed likely by host cell furin in the Golgi to yield the mature SU and TM proteins. The cleavage site between SU and TM requires the minimal sequence [KR]-X-[KR]-R. About 2 of the 9 disulfide bonds of gp41 are reduced by P4HB/PDI, following binding to CD4 receptor.

The protein resides in the virion membrane. Its subcellular location is the host cell membrane. It is found in the host endosome membrane. Functionally, attaches the virus to the host lymphoid cell by binding to the primary receptor CD4. This interaction induces a structural rearrangement creating a high affinity binding site for a chemokine coreceptor like CXCR4 and/or CCR5. Acts as a ligand for CD209/DC-SIGN and CLEC4M/DC-SIGNR, which are respectively found on dendritic cells (DCs), and on endothelial cells of liver sinusoids and lymph node sinuses. These interactions allow capture of viral particles at mucosal surfaces by these cells and subsequent transmission to permissive cells. HIV subverts the migration properties of dendritic cells to gain access to CD4+ T-cells in lymph nodes. Virus transmission to permissive T-cells occurs either in trans (without DCs infection, through viral capture and transmission), or in cis (following DCs productive infection, through the usual CD4-gp120 interaction), thereby inducing a robust infection. In trans infection, bound virions remain infectious over days and it is proposed that they are not degraded, but protected in non-lysosomal acidic organelles within the DCs close to the cell membrane thus contributing to the viral infectious potential during DCs' migration from the periphery to the lymphoid tissues. On arrival at lymphoid tissues, intact virions recycle back to DCs' cell surface allowing virus transmission to CD4+ T-cells. Acts as a class I viral fusion protein. Under the current model, the protein has at least 3 conformational states: pre-fusion native state, pre-hairpin intermediate state, and post-fusion hairpin state. During fusion of viral and target intracellular membranes, the coiled coil regions (heptad repeats) assume a trimer-of-hairpins structure, positioning the fusion peptide in close proximity to the C-terminal region of the ectodomain. The formation of this structure appears to drive apposition and subsequent fusion of viral and target cell membranes. Complete fusion occurs in host cell endosomes and is dynamin-dependent, however some lipid transfer might occur at the plasma membrane. The virus undergoes clathrin-dependent internalization long before endosomal fusion, thus minimizing the surface exposure of conserved viral epitopes during fusion and reducing the efficacy of inhibitors targeting these epitopes. Membranes fusion leads to delivery of the nucleocapsid into the cytoplasm. In terms of biological role, oligomerizes in the host endoplasmic reticulum into predominantly trimers. In a second time, gp160 transits in the host Golgi, where glycosylation is completed. The precursor is then proteolytically cleaved in the trans-Golgi and thereby activated by cellular furin or furin-like proteases to produce gp120 and gp41. The polypeptide is Envelope glycoprotein gp160 (Pan troglodytes (Chimpanzee)).